A 1872-amino-acid chain; its full sequence is Chitin synthase 6 (1872 aa).

The interval methionine 1–leucine 23 is disordered. Positions methionine 1–aspartate 779 constitute a Myosin motor domain. Glycine 104 to threonine 111 is an ATP binding site. Asparagine 123, asparagine 291, asparagine 428, and asparagine 559 each carry an N-linked (GlcNAc...) asparagine glycan. The tract at residues valine 587–serine 652 is disordered. Residues leucine 659–aspartate 683 are actin-binding. The N-linked (GlcNAc...) asparagine glycan is linked to asparagine 661. 2 helical membrane-spanning segments follow: residues tryptophan 881–glycine 901 and phenylalanine 920–valine 940. Residues glutamine 944–phenylalanine 1003 enclose the Cytochrome b5 heme-binding domain. Residues asparagine 1030, asparagine 1055, and asparagine 1120 are each glycosylated (N-linked (GlcNAc...) asparagine). The chain crosses the membrane as a helical span at residues phenylalanine 1193–leucine 1213. 2 N-linked (GlcNAc...) asparagine glycosylation sites follow: asparagine 1450 and asparagine 1556. 3 consecutive transmembrane segments (helical) span residues phenylalanine 1581–valine 1601, valine 1614–isoleucine 1634, and methionine 1641–leucine 1661. The 56-residue stretch at leucine 1814–serine 1869 folds into the DEK-C domain.

The protein belongs to the chitin synthase family. Class V subfamily.

Its subcellular location is the cell membrane. The enzyme catalyses [(1-&gt;4)-N-acetyl-beta-D-glucosaminyl](n) + UDP-N-acetyl-alpha-D-glucosamine = [(1-&gt;4)-N-acetyl-beta-D-glucosaminyl](n+1) + UDP + H(+). Polymerizes chitin, a structural polymer of the cell wall and septum, by transferring the sugar moiety of UDP-GlcNAc to the non-reducing end of the growing chitin polymer. Required for appressorium penetration and invasive growth. This Pyricularia oryzae (strain 70-15 / ATCC MYA-4617 / FGSC 8958) (Rice blast fungus) protein is Chitin synthase 6.